Reading from the N-terminus, the 336-residue chain is Cinnamoyl-CoA reductase 2 (336 aa).

NADP(+)-binding positions include Gly-21 to Ala-27, Arg-46, Lys-52, Asp-72 to Leu-73, Thr-92 to Ser-94, Tyr-165, Lys-169, Pro-192 to Val-195, and Ser-207. An intrachain disulfide couples Cys-158 to Cys-166. Lys-169 acts as the Proton donor in catalysis.

It belongs to the NAD(P)-dependent epimerase/dehydratase family. Dihydroflavonol-4-reductase subfamily. In terms of processing, the formation of a reversible disulfide bond reduces activity by perturbing the positioning of nearby catalytic residues. Mainly expressed in roots and stems, especially at the second internode and, to a lower extent, in leaves and flowers. Localized in vascular elements, with weaker expression in the interfascicular (xylem fiber) region.

The protein resides in the cytoplasm. It catalyses the reaction (E)-coniferaldehyde + NADP(+) + CoA = (E)-feruloyl-CoA + NADPH + H(+). The enzyme catalyses (E)-4-coumaraldehyde + NADP(+) + CoA = (E)-4-coumaroyl-CoA + NADPH + H(+). The catalysed reaction is (E)-sinapaldehyde + NADP(+) + CoA = (E)-sinapoyl-CoA + NADPH + H(+). It carries out the reaction (E)-cinnamaldehyde + NADP(+) + CoA = (E)-cinnamoyl-CoA + NADPH + H(+). It catalyses the reaction (E)-caffeyl aldehyde + NADP(+) + CoA = (E)-caffeoyl-CoA + NADPH + H(+). Its pathway is aromatic compound metabolism; phenylpropanoid biosynthesis. Its function is as follows. Involved in the latter stages of lignin biosynthesis. Catalyzes one of the last steps of monolignol biosynthesis, the conversion of cinnamoyl-CoAs into their corresponding cinnamaldehydes. Mediates the conversion of caffeoyl-CoA and coumaroyl-CoA to caffaldehyde and coumaraldehyde, respectively. Also active, with a lower efficiency, toward feruloyl-CoA and sinapoyl-CoA. Involved in the production of floral volatile phenylpropanoids in flowers of fragrant cultivars from cinnamic acid, a common precursor with the anthocyanin biosynthesis pathway involved in flower pigmentation. The sequence is that of Cinnamoyl-CoA reductase 2 from Medicago truncatula (Barrel medic).